The chain runs to 451 residues: tRNA-2-methylthio-N(6)-dimethylallyladenosine synthase (451 aa).

An MTTase N-terminal domain is found at 10–128 (KKFYTLTFGC…FPQLLEHVMQ (119 aa)). [4Fe-4S] cluster-binding residues include cysteine 19, cysteine 55, cysteine 89, cysteine 165, cysteine 169, and cysteine 172. Residues 151–381 (REDSIKAWVV…ISVQQEISEQ (231 aa)) form the Radical SAM core domain. The 64-residue stretch at 384-447 (KDLENTVQRI…SWNLYGEIFE (64 aa)) folds into the TRAM domain.

The protein belongs to the methylthiotransferase family. MiaB subfamily. In terms of assembly, monomer. Requires [4Fe-4S] cluster as cofactor.

Its subcellular location is the cytoplasm. It carries out the reaction N(6)-dimethylallyladenosine(37) in tRNA + (sulfur carrier)-SH + AH2 + 2 S-adenosyl-L-methionine = 2-methylsulfanyl-N(6)-dimethylallyladenosine(37) in tRNA + (sulfur carrier)-H + 5'-deoxyadenosine + L-methionine + A + S-adenosyl-L-homocysteine + 2 H(+). Catalyzes the methylthiolation of N6-(dimethylallyl)adenosine (i(6)A), leading to the formation of 2-methylthio-N6-(dimethylallyl)adenosine (ms(2)i(6)A) at position 37 in tRNAs that read codons beginning with uridine. This Natranaerobius thermophilus (strain ATCC BAA-1301 / DSM 18059 / JW/NM-WN-LF) protein is tRNA-2-methylthio-N(6)-dimethylallyladenosine synthase.